Consider the following 158-residue polypeptide: MPLTHLNEENQPKMVDIGDKETTERIALASGRISMNKEAYDAIVNHCVKKGPVLQTAIIAGIMGAKKTSELIPMCHSIMLNGVDIDILEEKETHSFKLYARVKTQAKTGVEMEALMSVSIGLLTIYDMVKAIDKSMTISGVMLEHKSGGKSGDYNAKK.

Substrate contacts are provided by residues Met-74–His-76 and Met-112–Glu-113. Asp-127 is an active-site residue.

Belongs to the MoaC family. Homohexamer; trimer of dimers.

The enzyme catalyses (8S)-3',8-cyclo-7,8-dihydroguanosine 5'-triphosphate = cyclic pyranopterin phosphate + diphosphate. It functions in the pathway cofactor biosynthesis; molybdopterin biosynthesis. Functionally, catalyzes the conversion of (8S)-3',8-cyclo-7,8-dihydroguanosine 5'-triphosphate to cyclic pyranopterin monophosphate (cPMP). This Helicobacter pylori (strain Shi470) protein is Cyclic pyranopterin monophosphate synthase.